The sequence spans 71 residues: uncharacterized protein (71 aa).

The chain crosses the membrane as a helical span at residues 44–66; that stretch reads LFFLVFRRLFSWFLVLLPSPRFF.

It is found in the membrane. This is an uncharacterized protein from Saccharomyces cerevisiae (strain ATCC 204508 / S288c) (Baker's yeast).